We begin with the raw amino-acid sequence, 387 residues long: Protein ERD1 homolog 2 (387 aa).

8 helical membrane-spanning segments follow: residues 20–40 (IGLLVIVGTWLWSVCYHLIYI), 92–112 (AGYCFAAILSISWATGFILFL), 126–146 (PIYPLLWVITAFILIVFPFPW), 177–197 (FIVSEIFTSYAKALGDFYIFG), 217–237 (GTFFVPLAMAYPFIVAILQCL), 252–272 (LLSALKHATALPVIYLSAIIH), 285–305 (GYLFWLWILSALLSSAYTFLW), and 326–346 (FPMFIYAIGCFINFILRVTWS). Residues 212 to 387 (DLKCDGTFFV…LFFHLDAISS (176 aa)) form the EXS domain.

Belongs to the ERD1 family.

It localises to the membrane. This Schizosaccharomyces pombe (strain 972 / ATCC 24843) (Fission yeast) protein is Protein ERD1 homolog 2.